We begin with the raw amino-acid sequence, 1321 residues long: Bile salt export pump (1321 aa).

Over 1-62 (MSDSVILRSV…FSSWTDIWLM (62 aa)) the chain is Cytoplasmic. The 324-residue stretch at 62 to 385 (MCMGSLCACI…ASPCLEAFAA (324 aa)) folds into the ABC transmembrane type-1 1 domain. Residues 63 to 83 (CMGSLCACIHGIAQPGVLLIF) form a helical membrane-spanning segment. The Extracellular portion of the chain corresponds to 84-147 (GTMTDVFIDY…MIRFAGYYAG (64 aa)). N-linked (GlcNAc...) asparagine glycosylation is found at Asn109, Asn116, Asn122, and Asn125. A helical membrane pass occupies residues 148–168 (IGIAVLTTGYIQICFWGIAAA). The Cytoplasmic segment spans residues 169–215 (HQIQKMRKSYFRKIMRMGIGWVDCNSVGKLNTPFSVDFNKINDSSAD). A helical membrane pass occupies residues 216–236 (QLAIFIQGMTSPIFGFLVGFS). The Extracellular segment spans residues 237 to 240 (QWWK). A helical transmembrane segment spans residues 241 to 261 (LTLVIISVSPLIGLGAAIIGL). Topologically, residues 262-319 (SVSKFTDYELKAYAKAGSVADEVISSMRTVAAFGGEKKEVERYEKNLVFAQRWGIRKG) are cytoplasmic. Residues 320–340 (IVMGFFTGYMWCLIFFCYALA) traverse the membrane as a helical segment. The Extracellular portion of the chain corresponds to 341-353 (FWYGSKLVLEEGE). The chain crosses the membrane as a helical span at residues 354-374 (YSPGALVQIFLSVIIGALNLG). Residues 375–755 (NASPCLEAFA…KLNAPEWPYM (381 aa)) are Cytoplasmic-facing. The 237-residue stretch at 420-656 (IEFHNVTFHY…KGVYFALVTL (237 aa)) folds into the ABC transporter 1 domain. ATP is bound at residue 455 to 462 (GPSGAGKS). Position 586 is a phosphothreonine (Thr586). Ser587 is modified (phosphoserine). Positions 651–672 (FALVTLQSQRNQGDQEENEKDA) are interaction with HAX1. Residues 659–735 (QRNQGDQEEN…KDKDLPAQED (77 aa)) are disordered. Residues 664-677 (DQEENEKDATEDDI) are compositionally biased toward acidic residues. Residues Ser690, Ser701, and Ser704 each carry the phosphoserine modification. Residues 714–731 (VEDHKSTHEEDRKDKDLP) are compositionally biased toward basic and acidic residues. The 289-residue stretch at 755 to 1043 (MLLGSMGAAV…ASSYTPSYAK (289 aa)) folds into the ABC transmembrane type-1 2 domain. A helical membrane pass occupies residues 756–776 (LLGSMGAAVNGAVTPLYAFLF). Residues 777-794 (SQILGTFSLPDKEEQRSQ) are Extracellular-facing. The chain crosses the membrane as a helical span at residues 795 to 815 (INGICLLFVTLGCVSFFTQFL). The Cytoplasmic portion of the chain corresponds to 816–869 (QGYTFAKSGELLTKRLRKFGFRAMLGQDIGWFDDLRNSPGALTTRLATDASQVQ). A run of 2 helical transmembrane segments spans residues 870–890 (GATG…TVAM) and 891–911 (IIAF…FPFL). The Cytoplasmic segment spans residues 912-979 (ALSGALQTKM…PYKMAIKKAN (68 aa)). A helical transmembrane segment spans residues 980–1000 (VYGLCFGFSQCITFIANSASY). At 1001 to 1011 (RYGGYLISNEG) the chain is on the extracellular side. Residues 1012–1032 (LHFSYVFRVISAVVLSATALG) form a helical membrane-spanning segment. At 1033-1321 (RASSYTPSYA…KLVTTGSPIS (289 aa)) the chain is on the cytoplasmic side. Positions 1078 to 1316 (IDFVDCKFTY…KGAYYKLVTT (239 aa)) constitute an ABC transporter 2 domain. Position 1113 to 1120 (1113 to 1120 (GSSGCGKS)) interacts with ATP. A phosphoserine mark is found at Ser1214 and Ser1321.

This sequence belongs to the ABC transporter superfamily. ABCB family. Multidrug resistance exporter (TC 3.A.1.201) subfamily. Interacts with HAX1. Interacts with the adapter protein complex 2 (AP-2) throught AP2A2 or AP2A1; this interaction regulates cell membrane expression of ABCB11 through its internalization in a clathrin-dependent manner and its subsequent degradation. In terms of processing, N-glycosylated. Ubiquitinated; short-chain ubiquitination regulates cell-Surface expression of ABCB11. In terms of tissue distribution, expressed predominantly, if not exclusively in the liver, where it was further localized to the canalicular microvilli and to subcanalicular vesicles of the hepatocytes by in situ.

The protein resides in the apical cell membrane. The protein localises to the recycling endosome membrane. Its subcellular location is the endosome. It localises to the cell membrane. It catalyses the reaction cholate(in) + ATP + H2O = cholate(out) + ADP + phosphate + H(+). It carries out the reaction taurocholate(in) + ATP + H2O = taurocholate(out) + ADP + phosphate + H(+). The catalysed reaction is glycocholate(in) + ATP + H2O = glycocholate(out) + ADP + phosphate + H(+). The enzyme catalyses glycochenodeoxycholate(in) + ATP + H2O = glycochenodeoxycholate(out) + ADP + phosphate + H(+). It catalyses the reaction taurochenodeoxycholate(in) + ATP + H2O = taurochenodeoxycholate(out) + ADP + phosphate + H(+). It carries out the reaction glycoursodeoxycholate(in) + ATP + H2O = glycoursodeoxycholate(out) + ADP + phosphate + H(+). The catalysed reaction is tauroursodeoxycholate(in) + ATP + H2O = tauroursodeoxycholate(out) + ADP + phosphate + H(+). The enzyme catalyses taurodeoxycholate(in) + ATP + H2O = taurodeoxycholate(out) + ADP + phosphate + H(+). It catalyses the reaction taurolithocholate 3-sulfate(in) + ATP + H2O = taurolithocholate 3-sulfate(out) + ADP + phosphate + H(+). It carries out the reaction pravastatin(in) + ATP + H2O = pravastatin(out) + ADP + phosphate + H(+). With respect to regulation, the uptake of taurocholate is inhibited by taurolithocholate sulfate with an IC(50) of 9 uM. Pravastatin competitively inhibits the transport of taurocholic acid. Cyclosporin A, glibenclamide, rifampicin and troglitazonestrongly competitively inhibit the transport activity of taurocholate. The canalicular transport activity of taurocholate is strongly dependent on canalicular membrane cholesterol content. The uptake of taurocholate is increased by short- and medium-chain fatty acids. Cholesterol increases transport capacity of taurocholate without affecting the affinity for the substrate. In terms of biological role, catalyzes the transport of the major hydrophobic bile salts, such as taurine and glycine-conjugated cholic acid across the canalicular membrane of hepatocytes in an ATP-dependent manner, therefore participates in hepatic bile acid homeostasis and consequently to lipid homeostasis through regulation of biliary lipid secretion in a bile salts dependent manner. Transports taurine-conjugated bile salts more rapidly than glycine-conjugated bile salts. Also transports non-bile acid compounds, such as pravastatin and fexofenadine in an ATP-dependent manner and may be involved in their biliary excretion. This Oryctolagus cuniculus (Rabbit) protein is Bile salt export pump.